The primary structure comprises 519 residues: Xylose import ATP-binding protein XylG (519 aa).

ABC transporter domains follow at residues 6-245 and 262-507; these read LTMR…VGRE and LEAR…LTPA. ATP is bound at residue 38–45; the sequence is GENGAGKS.

The protein belongs to the ABC transporter superfamily. Xylose importer (TC 3.A.1.2.4) family. In terms of assembly, the complex is composed of two ATP-binding proteins (XylG), two transmembrane proteins (XylH) and a solute-binding protein (XylF).

Its subcellular location is the cell inner membrane. The enzyme catalyses D-xylose(out) + ATP + H2O = D-xylose(in) + ADP + phosphate + H(+). In terms of biological role, part of the ABC transporter complex XylFGH involved in xylose import. Responsible for energy coupling to the transport system. The chain is Xylose import ATP-binding protein XylG from Burkholderia ambifaria (strain ATCC BAA-244 / DSM 16087 / CCUG 44356 / LMG 19182 / AMMD) (Burkholderia cepacia (strain AMMD)).